A 462-amino-acid polypeptide reads, in one-letter code: Cytochrome P450 20A1 (462 aa).

A helical membrane pass occupies residues 4–24; it reads FAIFAVTFLLALVGAVLYLYP. Residue C409 coordinates heme.

The protein belongs to the cytochrome P450 family. Requires heme as cofactor.

The protein resides in the membrane. This Rattus norvegicus (Rat) protein is Cytochrome P450 20A1 (Cyp20a1).